The chain runs to 189 residues: MANYSTSEFKSGLKVMLDGDPCSIIENEFVKPGKGQAFSRVKLRNLRNGKVWERTFKSGDSLEGADVMDVSMQYIYSDGEFWHFMDQTSFEQKQADETAVRDAKQWLKEEDICEVTLYNGEPLSVSPPNFVELEIIETDPGLKGDTAGTGGKPATLSTGAVVRVPLFVQTGEIVKVDTRTGDYVGRIKQ.

At Lys34 the chain carries N6-(3,6-diaminohexanoyl)-5-hydroxylysine.

The protein belongs to the elongation factor P family. May be beta-lysylated on the epsilon-amino group of Lys-34 by the combined action of EpmA and EpmB, and then hydroxylated on the C5 position of the same residue by EpmC (if this protein is present). Lysylation is critical for the stimulatory effect of EF-P on peptide-bond formation. The lysylation moiety may extend toward the peptidyltransferase center and stabilize the terminal 3-CCA end of the tRNA. Hydroxylation of the C5 position on Lys-34 may allow additional potential stabilizing hydrogen-bond interactions with the P-tRNA.

It is found in the cytoplasm. It functions in the pathway protein biosynthesis; polypeptide chain elongation. Functionally, involved in peptide bond synthesis. Alleviates ribosome stalling that occurs when 3 or more consecutive Pro residues or the sequence PPG is present in a protein, possibly by augmenting the peptidyl transferase activity of the ribosome. Modification of Lys-34 is required for alleviation. The polypeptide is Elongation factor P (Alcanivorax borkumensis (strain ATCC 700651 / DSM 11573 / NCIMB 13689 / SK2)).